We begin with the raw amino-acid sequence, 279 residues long: 3-methyl-2-oxobutanoate hydroxymethyltransferase (279 aa).

Mg(2+) contacts are provided by D44 and D83. Residues 44–45 (DS), D83, and K113 each bind 3-methyl-2-oxobutanoate. E115 serves as a coordination point for Mg(2+). E182 (proton acceptor) is an active-site residue.

This sequence belongs to the PanB family. As to quaternary structure, homodecamer; pentamer of dimers. The cofactor is Mg(2+).

Its subcellular location is the cytoplasm. It carries out the reaction 3-methyl-2-oxobutanoate + (6R)-5,10-methylene-5,6,7,8-tetrahydrofolate + H2O = 2-dehydropantoate + (6S)-5,6,7,8-tetrahydrofolate. It participates in cofactor biosynthesis; (R)-pantothenate biosynthesis; (R)-pantoate from 3-methyl-2-oxobutanoate: step 1/2. In terms of biological role, catalyzes the reversible reaction in which hydroxymethyl group from 5,10-methylenetetrahydrofolate is transferred onto alpha-ketoisovalerate to form ketopantoate. This is 3-methyl-2-oxobutanoate hydroxymethyltransferase from Dehalococcoides mccartyi (strain CBDB1).